We begin with the raw amino-acid sequence, 292 residues long: 31 kDa ribonucleoprotein, chloroplastic (292 aa).

The region spanning 88 to 166 is the RRM 1 domain; sequence LKLFVGNLPF…RAIRVNAGPA (79 aa). Positions 165 to 203 are disordered; that stretch reads PAPAKRENSSFGGGRGGNSSYGGGRDGNSSFGGARGGRS. The tract at residues 167–207 is linker (Gly-rich); it reads PAKRENSSFGGGRGGNSSYGGGRDGNSSFGGARGGRSVDSS. Gly residues predominate over residues 175–190; sequence FGGGRGGNSSYGGGRD. One can recognise an RRM 2 domain in the interval 208–286; it reads NRVYVGNLSW…RSIRVSAAEE (79 aa).

Expressed at high levels in the leaves and seedlings, and lower levels are seen in the stems and roots.

It localises to the plastid. The protein resides in the chloroplast. This Nicotiana plumbaginifolia (Leadwort-leaved tobacco) protein is 31 kDa ribonucleoprotein, chloroplastic.